Here is a 293-residue protein sequence, read N- to C-terminus: MPPKPDPSSSGEAPQAMQPAPPPRAEGHMYAQPEGPGQNEEAMLEQRLIRLIELMATKRHNSTLSNISFEIGRPSLEPTPEMRRNPENPYSRFSIDELFKMEIRSVSNNMANTEQMAQITADIAGLGVPTEHVAGVILKVVIMCASVSSSVYLDPAGTVEFPTGAVPLDSIIAIMKNRAGLRKVCRLYAPVVWNYMLVQNRPPSDWQAMGFQWNARFAAFDTFDYVTNGAAIQPVEGLIRRPTPEETIAHNAHKSMAIDKSNRNERLANTNVEYTGGMLGAEIVRNHRNAINQ.

The tract at residues Met-1–Asn-39 is disordered.

The protein belongs to the potexviruses coat protein family.

It localises to the virion. In terms of biological role, required for genome encapsidation. Forms ribonucleoprotein complexes along with TGB1 helicase and viral RNA. The chain is Capsid protein from Solanum tuberosum (Potato).